The primary structure comprises 294 residues: Filamin-B (294 aa).

Filamin repeat units lie at residues 1-67 (GTRL…KVRV) and 71-163 (GQAG…KAKV). A phosphoserine mark is found at serine 61 and serine 157. Lysine 160 is covalently cross-linked (Glycyl lysine isopeptide (Lys-Gly) (interchain with G-Cter in ISG15)). The tract at residues 164 to 198 (TGQRLVGPGSTNETSSILVESVTRSSTETCYSAIP) is hinge 2. The tract at residues 164 to 294 (TGQRLVGPGS…PGSPFHVTVP (131 aa)) is self-association site, tail. A phosphoserine mark is found at serine 173 and serine 184. A Filamin 24 repeat occupies 199 to 293 (KASSDASKVT…IPGSPFHVTV (95 aa)). N6-succinyllysine occurs at positions 210 and 216. N6-acetyllysine is present on lysine 268.

The protein belongs to the filamin family. Homodimer. Interacts with FLNA, FLNC, INPPL1, ITGB1A, ITGB1D, ITGB3, ITGB6, MYOT, MYOZ1, PSEN1 and PSEN2. Interacts with MICALL2. Interacts with RFLNA and RFLNB. Interacts with HTLV-I viral p13 protein. Interacts with ASB2; the interaction targets FLNB for proteasomal degradation. Post-translationally, ISGylation prevents ability to interact with the upstream activators of the JNK cascade and inhibits IFNA-induced JNK signaling. In terms of processing, ubiquitination by a SCF-like complex containing ASB2 leads to proteasomal degradation which promotes muscle differentiation.

The protein localises to the cytoplasm. The protein resides in the cell cortex. It is found in the cytoskeleton. Its subcellular location is the myofibril. It localises to the sarcomere. The protein localises to the z line. In terms of biological role, connects cell membrane constituents to the actin cytoskeleton. May promote orthogonal branching of actin filaments and links actin filaments to membrane glycoproteins. Anchors various transmembrane proteins to the actin cytoskeleton. This chain is Filamin-B (FLNB), found in Oryctolagus cuniculus (Rabbit).